An 828-amino-acid polypeptide reads, in one-letter code: USP6 N-terminal-like protein (828 aa).

Met-1 bears the N-acetylmethionine mark. The region spanning 100–292 (GIPLQLRGEV…RIWDIYIFEG (193 aa)) is the Rab-GAP TBC domain. A compositionally biased stretch (basic and acidic residues) spans 355–367 (DLPEPGKEDEYPK). A disordered region spans residues 355-722 (DLPEPGKEDE…NSGSPKNGKL (368 aa)). Phosphoserine is present on residues Ser-391, Ser-396, and Ser-400. Residues 434–451 (KSVEEESKKLKDEADFQR) are compositionally biased toward basic and acidic residues. A compositionally biased stretch (low complexity) spans 465–478 (NHAAANQNSNATSN). Composition is skewed to basic and acidic residues over residues 498-508 (RTAKYTMEGKG) and 535-544 (KALDAEDGKR). A phosphoserine mark is found at Ser-546 and Ser-549. Tyr-582 is modified (phosphotyrosine). At Ser-585 the chain carries Phosphoserine. Residues 592–603 (PSSSPSKVSNKF) show a composition bias toward polar residues. Phosphoserine is present on residues Ser-642, Ser-655, Ser-659, Ser-676, and Ser-680. Composition is skewed to polar residues over residues 648 to 666 (TANSSFASPQFSPGTQLNP) and 673 to 683 (STLSVSASPEK). Residues 686-697 (SRPSPLVLPSSR) are compositionally biased toward low complexity. Position 716 is a phosphoserine (Ser-716). Tyr-729 carries the phosphotyrosine modification. The tract at residues 789–817 (KASPAAEDASPSGYPYSGPPPPAYHYRNR) is disordered.

As to quaternary structure, interacts with EPS8. In terms of tissue distribution, widely expressed.

The protein localises to the golgi apparatus. The protein resides in the cytoplasmic vesicle. Its function is as follows. Acts as a GTPase-activating protein for RAB5A and RAB43. Involved in receptor trafficking. In complex with EPS8 inhibits internalization of EGFR. Involved in retrograde transport from the endocytic pathway to the Golgi apparatus. Involved in the transport of Shiga toxin from early and recycling endosomes to the trans-Golgi network. Required for structural integrity of the Golgi complex. In Homo sapiens (Human), this protein is USP6 N-terminal-like protein (USP6NL).